Consider the following 303-residue polypeptide: Serine/threonine-protein phosphatase PP-X homolog 2 (303 aa).

Residues D51, H53, D79, and N111 each coordinate Mn(2+). The active-site Proton donor is H112. Positions 161 and 235 each coordinate Mn(2+).

This sequence belongs to the PPP phosphatase family. PP-4 (PP-X) subfamily. Requires Mn(2+) as cofactor.

It catalyses the reaction O-phospho-L-seryl-[protein] + H2O = L-seryl-[protein] + phosphate. It carries out the reaction O-phospho-L-threonyl-[protein] + H2O = L-threonyl-[protein] + phosphate. The protein is Serine/threonine-protein phosphatase PP-X homolog 2 (Ppx2) of Paramecium tetraurelia.